The sequence spans 201 residues: Recombination protein RecR (201 aa).

The C4-type zinc-finger motif lies at 60–75 (CQVCGNVDVRDPCTVC). One can recognise a Toprim domain in the interval 83-178 (SVLVVVAEVA…KVTRLAHGVP (96 aa)).

The protein belongs to the RecR family.

Its function is as follows. May play a role in DNA repair. It seems to be involved in an RecBC-independent recombinational process of DNA repair. It may act with RecF and RecO. The protein is Recombination protein RecR of Azorhizobium caulinodans (strain ATCC 43989 / DSM 5975 / JCM 20966 / LMG 6465 / NBRC 14845 / NCIMB 13405 / ORS 571).